Reading from the N-terminus, the 683-residue chain is Elongation factor G 1 (683 aa).

The region spanning 3 to 278 (DKMRNIGIMA…AVVDFLPAPN (276 aa)) is the tr-type G domain. Residues 12 to 19 (AHIDAGKT), 76 to 80 (DTPGH), and 130 to 133 (NKMD) each bind GTP.

The protein belongs to the TRAFAC class translation factor GTPase superfamily. Classic translation factor GTPase family. EF-G/EF-2 subfamily.

Its subcellular location is the cytoplasm. In terms of biological role, catalyzes the GTP-dependent ribosomal translocation step during translation elongation. During this step, the ribosome changes from the pre-translocational (PRE) to the post-translocational (POST) state as the newly formed A-site-bound peptidyl-tRNA and P-site-bound deacylated tRNA move to the P and E sites, respectively. Catalyzes the coordinated movement of the two tRNA molecules, the mRNA and conformational changes in the ribosome. This chain is Elongation factor G 1, found in Treponema denticola (strain ATCC 35405 / DSM 14222 / CIP 103919 / JCM 8153 / KCTC 15104).